The following is a 149-amino-acid chain: Deoxyuridine 5'-triphosphate nucleotidohydrolase (149 aa).

Substrate contacts are provided by residues 68 to 70 (RSG), Asn-81, 85 to 87 (LID), and Met-95.

The protein belongs to the dUTPase family. Requires Mg(2+) as cofactor.

The catalysed reaction is dUTP + H2O = dUMP + diphosphate + H(+). It participates in pyrimidine metabolism; dUMP biosynthesis; dUMP from dCTP (dUTP route): step 2/2. Its function is as follows. This enzyme is involved in nucleotide metabolism: it produces dUMP, the immediate precursor of thymidine nucleotides and it decreases the intracellular concentration of dUTP so that uracil cannot be incorporated into DNA. The chain is Deoxyuridine 5'-triphosphate nucleotidohydrolase from Methylibium petroleiphilum (strain ATCC BAA-1232 / LMG 22953 / PM1).